We begin with the raw amino-acid sequence, 216 residues long: Probable transaldolase (216 aa).

The Schiff-base intermediate with substrate role is filled by Lys83.

It belongs to the transaldolase family. Type 3B subfamily.

Its subcellular location is the cytoplasm. The catalysed reaction is D-sedoheptulose 7-phosphate + D-glyceraldehyde 3-phosphate = D-erythrose 4-phosphate + beta-D-fructose 6-phosphate. Its pathway is carbohydrate degradation; pentose phosphate pathway; D-glyceraldehyde 3-phosphate and beta-D-fructose 6-phosphate from D-ribose 5-phosphate and D-xylulose 5-phosphate (non-oxidative stage): step 2/3. In terms of biological role, transaldolase is important for the balance of metabolites in the pentose-phosphate pathway. The sequence is that of Probable transaldolase from Sphingopyxis alaskensis (strain DSM 13593 / LMG 18877 / RB2256) (Sphingomonas alaskensis).